Here is a 535-residue protein sequence, read N- to C-terminus: Expansin-like protein 9 (535 aa).

Residues 1-25 (MKINKNNYFKIIIFIIYVIINLINA) form the signal peptide. Asparagine 24 carries N-linked (GlcNAc...) asparagine glycosylation. At 26-514 (SDNVKLSNCG…DNSSNILLFS (489 aa)) the chain is on the extracellular side. An Expansin-like EG45 domain is found at 31 to 144 (LSNCGQARAE…QEVSCGFLGN (114 aa)). 2 disulfide bridges follow: cysteine 34–cysteine 75 and cysteine 78–cysteine 139. N-linked (GlcNAc...) asparagine glycans are attached at residues asparagine 122, asparagine 257, and asparagine 292. The interval 459–487 (VDGSSNDDDGTGGTGGGASNKVGKRVDGE) is disordered. A glycan (N-linked (GlcNAc...) asparagine) is linked at asparagine 506. Residues 515 to 535 (FNITLTFLLLSLIINILLLLF) traverse the membrane as a helical segment.

This sequence belongs to the expansin family. Expansin A subfamily.

The protein resides in the membrane. Its function is as follows. May serve to lubricate the movement of the cellulose microfibrils during cell growth and wall extension and/or may serve to maintain the fluid state of the slug cell wall. The sequence is that of Expansin-like protein 9 (expl9) from Dictyostelium discoideum (Social amoeba).